Reading from the N-terminus, the 183-residue chain is ATP synthase subunit b, chloroplastic (183 aa).

A helical membrane pass occupies residues 28–48 (DIFEANVINILLLLFGLIYVL).

It belongs to the ATPase B chain family. F-type ATPases have 2 components, F(1) - the catalytic core - and F(0) - the membrane proton channel. F(1) has five subunits: alpha(3), beta(3), gamma(1), delta(1), epsilon(1). F(0) has four main subunits: a(1), b(1), b'(1) and c(10-14). The alpha and beta chains form an alternating ring which encloses part of the gamma chain. F(1) is attached to F(0) by a central stalk formed by the gamma and epsilon chains, while a peripheral stalk is formed by the delta, b and b' chains.

It is found in the plastid. The protein localises to the chloroplast thylakoid membrane. Its function is as follows. F(1)F(0) ATP synthase produces ATP from ADP in the presence of a proton or sodium gradient. F-type ATPases consist of two structural domains, F(1) containing the extramembraneous catalytic core and F(0) containing the membrane proton channel, linked together by a central stalk and a peripheral stalk. During catalysis, ATP synthesis in the catalytic domain of F(1) is coupled via a rotary mechanism of the central stalk subunits to proton translocation. Component of the F(0) channel, it forms part of the peripheral stalk, linking F(1) to F(0). This Pyropia yezoensis (Susabi-nori) protein is ATP synthase subunit b, chloroplastic.